The primary structure comprises 452 residues: MTSYGNGFRMMAKCLLSLRSGYSVTAPVSKSMANVLWARYASTRIKTPPFPESITEGTLAQWLKQPGEYVNKDEEIASVETDKIDAPVTAPDAGVLKEQLVKEGDTITIDQDIAVIDTSAAPPEGGSAGPKKDEVKTADADAAKDLSTPQDSSKPIEEKPMPDLGAEQKESAPSSTKPAPDAKEPEFSSPKPKPAKSEPVKQSKPKATETARPSSFSRNEDRVKMNRMRLRIAERLKESQNRAASLTTFNECDMSAVVALRKKYKDEILKETGVKIGFMSFFSKACTQAMKQIPAINGSIEGEGKGDTLVYRDFCDLSIAVATPKGLVTPVIRNAESMSLLEIESAIATLGSKARAGKLAIEDMASGTFTISNGGIFGSLYGTPIINLPQTAVLGLHAIKERPVVINGQVVPRPMMYLALTYDHRMVDGREAVTFLRLVKEYIEDPAKMLLV.

One can recognise a Lipoyl-binding domain in the interval Ser42–Asp117. An N6-lipoyllysine modification is found at Lys83. The disordered stretch occupies residues Ser119–Met225. Composition is skewed to basic and acidic residues over residues Pro130–Lys144, Lys154–Glu170, and Ala195–Glu209. Catalysis depends on residues His424 and Asp428.

The protein belongs to the 2-oxoacid dehydrogenase family. (R)-lipoate is required as a cofactor.

Its subcellular location is the mitochondrion. The enzyme catalyses N(6)-[(R)-dihydrolipoyl]-L-lysyl-[protein] + succinyl-CoA = N(6)-[(R)-S(8)-succinyldihydrolipoyl]-L-lysyl-[protein] + CoA. It participates in amino-acid degradation; L-lysine degradation via saccharopine pathway; glutaryl-CoA from L-lysine: step 6/6. In terms of biological role, the 2-oxoglutarate dehydrogenase complex catalyzes the overall conversion of 2-oxoglutarate to succinyl-CoA and CO(2). It contains multiple copies of three enzymatic components: 2-oxoglutarate dehydrogenase (E1), dihydrolipoamide succinyltransferase (E2) and lipoamide dehydrogenase (E3). The polypeptide is Probable dihydrolipoyllysine-residue succinyltransferase component of 2-oxoglutarate dehydrogenase complex, mitochondrial (kgd2) (Schizosaccharomyces pombe (strain 972 / ATCC 24843) (Fission yeast)).